The primary structure comprises 123 residues: Succinate dehydrogenase hydrophobic membrane anchor subunit (123 aa).

Residues 1-13 lie on the Cytoplasmic side of the membrane; that stretch reads MAETEKMKYGSLN. Residues 14–34 form a helical membrane-spanning segment; it reads RFAQAVTGLFLLFFLGVHLYV. Over 35 to 59 the chain is Extracellular; the sequence is AHIDFGHPVAFFSSVINQLHNPWWL. A helical membrane pass occupies residues 60-81; sequence AFFLIFVYIITYHGINGLNHIV. Residue His72 coordinates heme. The Cytoplasmic portion of the chain corresponds to 82–91; sequence ADTSISEKAK. Residues 92-116 traverse the membrane as a helical segment; the sequence is RNIGIALMVIYVITIIYGTILALLV.

Part of an enzyme complex containing four subunits: a flavoprotein, an iron-sulfur protein, plus two membrane-anchoring proteins, SdhC and SdhD. The cofactor is heme.

The protein resides in the cell membrane. It functions in the pathway carbohydrate metabolism; tricarboxylic acid cycle. Membrane-anchoring subunit of succinate dehydrogenase (SDH). This is Succinate dehydrogenase hydrophobic membrane anchor subunit (sdhD) from Thermoplasma acidophilum (strain ATCC 25905 / DSM 1728 / JCM 9062 / NBRC 15155 / AMRC-C165).